The primary structure comprises 429 residues: Histidine--tRNA ligase (429 aa).

Belongs to the class-II aminoacyl-tRNA synthetase family. As to quaternary structure, homodimer.

The protein localises to the cytoplasm. It catalyses the reaction tRNA(His) + L-histidine + ATP = L-histidyl-tRNA(His) + AMP + diphosphate + H(+). The polypeptide is Histidine--tRNA ligase (Prochlorococcus marinus subsp. pastoris (strain CCMP1986 / NIES-2087 / MED4)).